Consider the following 173-residue polypeptide: Mediator of RNA polymerase II transcription subunit 10 (173 aa).

Over residues 1–20 (MDPNSPMFQNTPQQPMSLQR) the composition is skewed to polar residues. Residues 1–45 (MDPNSPMFQNTPQQPMSLQRSVDDRIDRERTAKKEKDDEKKKQED) form a disordered region. Positions 21 to 45 (SVDDRIDRERTAKKEKDDEKKKQED) are enriched in basic and acidic residues.

It belongs to the Mediator complex subunit 10 family. Component of the Mediator complex.

It is found in the nucleus. Component of the Mediator complex, a coactivator involved in the regulated transcription of nearly all RNA polymerase II-dependent genes. Mediator functions as a bridge to convey information from gene-specific regulatory proteins to the basal RNA polymerase II transcription machinery. Mediator is recruited to promoters by direct interactions with regulatory proteins and serves as a scaffold for the assembly of a functional preinitiation complex with RNA polymerase II and the general transcription factors. This Caenorhabditis briggsae protein is Mediator of RNA polymerase II transcription subunit 10 (mdt-10).